A 441-amino-acid polypeptide reads, in one-letter code: Cytochrome c biogenesis protein Ccs1 (441 aa).

The next 3 membrane-spanning stretches (helical) occupy residues 19–39 (LKLA…GTVI), 78–98 (TWWF…CTLA), and 164–184 (IGPI…LLGN).

Belongs to the Ccs1/CcsB family. As to quaternary structure, may interact with CcsA.

Its subcellular location is the plastid. The protein resides in the chloroplast thylakoid membrane. Its function is as follows. Required during biogenesis of c-type cytochromes (cytochrome c6 and cytochrome f) at the step of heme attachment. This chain is Cytochrome c biogenesis protein Ccs1, found in Rhodomonas salina (Cryptomonas salina).